Here is a 437-residue protein sequence, read N- to C-terminus: MIIGKSPCSVCGEAGDGAHFGAEACRACAAFFRRSVALNKAYVCRAMGTCVIQKNVRCMCRACRFTKCIAVGMRKSAVQRHRELFASQETSSESSSNPRISPTLSWPMDISPQSYEETGMPTLSQLNENYNQMSTVRRVIHNTGGDNIFHRREPKAVAYTDAHNVHLKEIGLVADWIIKSYPDFEQLHQEQKKLLYRNFFLPFMILECGYMCCLNNRTDILFLPSGDYIDCNRPETFYGHRIKSHLISPNEAVRMFGPSFEIYRRNVLDPMRRENVDNFEFFTLCSLVLWDHGLEGQTEECVQMARCNRERILREVLYYYRRVKQISDPSMRLANLLVLLPALQRSVRRFQEDVEITHVFNVYSVEETFYELVSGRLSDSFFQTTQLTTSVEEEKVIKTEEIDSVWDLNKGQLVEMYEFPTPPLHTPTEMDPSTTQL.

The nuclear receptor DNA-binding region spans 5–80 (KSPCSVCGEA…VGMRKSAVQR (76 aa)). 2 NR C4-type zinc fingers span residues 8-28 (CSVC…CRAC) and 44-68 (CRAM…FTKC). An NR LBD domain is found at 115-376 (YEETGMPTLS…ETFYELVSGR (262 aa)).

The protein belongs to the nuclear hormone receptor family. In terms of tissue distribution, expressed in the pharynx, intestine and hypodermis.

The protein resides in the nucleus. Its function is as follows. Orphan nuclear receptor. This chain is Nuclear hormone receptor family member nhr-28 (nhr-28), found in Caenorhabditis elegans.